Here is a 108-residue protein sequence, read N- to C-terminus: MLKASLLFFVTALAEIIGCFLPYLWLRKGASMWLLLPAAASLALFVWLLTLHPAASGRVYAAYGGVYVATALIWLRVVDDVKLSLFDWVGAAVALVGMLIIVAGWRVN.

A run of 4 helical transmembrane segments spans residues 6–26 (LLFF…YLWL), 29–49 (GASM…VWLL), 59–79 (VYAA…RVVD), and 85–105 (LFDW…VAGW).

Belongs to the UPF0060 family.

It localises to the cell inner membrane. The polypeptide is UPF0060 membrane protein YE2027 (Yersinia enterocolitica serotype O:8 / biotype 1B (strain NCTC 13174 / 8081)).